The primary structure comprises 244 residues: tRNA pseudouridine synthase A (244 aa).

Catalysis depends on Asp52, which acts as the Nucleophile. Tyr110 is a substrate binding site.

Belongs to the tRNA pseudouridine synthase TruA family. In terms of assembly, homodimer.

The enzyme catalyses uridine(38/39/40) in tRNA = pseudouridine(38/39/40) in tRNA. Formation of pseudouridine at positions 38, 39 and 40 in the anticodon stem and loop of transfer RNAs. The protein is tRNA pseudouridine synthase A of Brevibacillus brevis (strain 47 / JCM 6285 / NBRC 100599).